The chain runs to 1453 residues: NRPS-like tryptophan epimerase fscC (1453 aa).

An adenylation region spans residues Ser37–Val433. The Carrier domain maps to Thr544 to Thr626. An O-(pantetheine 4'-phosphoryl)serine modification is found at Ser586. Positions Phe639–Phe1053 are epimerization (E) domain. Positions Phe1181 to Gln1391 are condensation.

This sequence belongs to the NRP synthetase family. The cofactor is pantetheine 4'-phosphate.

It participates in secondary metabolite biosynthesis. In terms of biological role, NRPS-like tryptophan epimerase; part of the fragmented gene cluster that mediates the biosynthesis of fusarochromene, a tryptophan-derived metabolite closely related to a group of mycotoxins including fusarochromanone. Within the pathway, fscC catalyzes the first step via epimerization of L-tryptophan to provide the intermediate D-tryptophan. D-tryptophan is subsequently hydroxylated by the tryptophan 6-hydroxylase fscE to yield 6-hydroxytryptophan. The pyrrole ring undergoes cleavaged by the tryptophan 2,3-dioxygenase fscD and is finally converted to 4-hydroxykyrunenine by the hydrolase fscH. The NRPS-like oxidoreductase fscA reduces the carboxyl group to primary alcohol and the DMATS-type prenyltransferase fscG performs prenylation, followed by the formation of a chromene ring catalyzed by the oxidoreductase fscI, which leads to desacetylfusarochromene. Epoxidation by fscF and rearrangement reactions of chromene double bonds convert compound desacetylfusarochromene to fusarochromanones. Although specific acetyltransferases were not found near the fsc gene cluster, several predicted enzymes containing the N-acetyltransferase superfamily domain are present in the genome of F.equiseti. These predicted enzymes may have the potential to convert desacetylfusarochromene to fusarochromene. The sequence is that of NRPS-like tryptophan epimerase fscC from Fusarium equiseti (Fusarium scirpi).